A 1143-amino-acid polypeptide reads, in one-letter code: Exportin-T (1143 aa).

The interval 566–593 (ARNKLRAAQGSGRTTPSSSDNVDLGPSS) is disordered. A compositionally biased stretch (polar residues) spans 576–593 (SGRTTPSSSDNVDLGPSS).

The protein belongs to the exportin family.

The protein resides in the nucleus. It is found in the cytoplasm. Its function is as follows. tRNA nucleus export receptor which facilitates tRNA translocation across the nuclear pore complex. Involved in pre-tRNA splicing, probably by affecting the interaction of pre-tRNA with splicing endonuclease. The chain is Exportin-T (LOS1) from Cryptococcus neoformans var. neoformans serotype D (strain JEC21 / ATCC MYA-565) (Filobasidiella neoformans).